The chain runs to 271 residues: Ribonuclease 3 (271 aa).

An RNase III domain is found at 5 to 139 (PALLELKLDY…IMAAIYLDGG (135 aa)). E52 serves as a coordination point for Mg(2+). The active site involves D56. Mg(2+) is bound by residues D125 and E128. E128 is an active-site residue. One can recognise a DRBM domain in the interval 172-241 (NFKSALQELA…ARGLYERLMG (70 aa)). Residues 241-271 (GDPIVPLPDDSPGDSPDDSGDAAESGVISAT) are disordered. The span at 251–261 (SPGDSPDDSGD) shows a compositional bias: acidic residues.

It belongs to the ribonuclease III family. Homodimer. It depends on Mg(2+) as a cofactor.

It is found in the cytoplasm. The catalysed reaction is Endonucleolytic cleavage to 5'-phosphomonoester.. Digests double-stranded RNA. Involved in the processing of primary rRNA transcript to yield the immediate precursors to the large and small rRNAs (23S and 16S). Processes some mRNAs, and tRNAs when they are encoded in the rRNA operon. Processes pre-crRNA and tracrRNA of type II CRISPR loci if present in the organism. The protein is Ribonuclease 3 of Solibacter usitatus (strain Ellin6076).